The following is a 146-amino-acid chain: MAAPVEQTIKLQIKGGQANPAPPIGPALGQHGVNIMEFCKAFNSRTEDRMGTLLPVEITVYADRSFDFIVKSPPASVLLKQKADIETAAGDPLRDDAGTVTWDDCLDIADQKLQDLNAHTVEKGASMVAGTARSMGITVEGKPAHE.

Belongs to the universal ribosomal protein uL11 family. Part of the ribosomal stalk of the 50S ribosomal subunit. Interacts with L10 and the large rRNA to form the base of the stalk. L10 forms an elongated spine to which L12 dimers bind in a sequential fashion forming a multimeric L10(L12)X complex. One or more lysine residues are methylated.

Its function is as follows. Forms part of the ribosomal stalk which helps the ribosome interact with GTP-bound translation factors. The protein is Large ribosomal subunit protein uL11 of Salinibacter ruber (strain DSM 13855 / M31).